A 291-amino-acid polypeptide reads, in one-letter code: MPELPEVETVRRGLQPAMEGFRIDRAVAHRENLRFPLQKDFVARLTGQTVTGLGRRAKYLLADLSSGDVLLMHLGMSGSFRVVEADGETRPGEFHYPRSEDRTHDHVVFEMASGARVVFNDPRRFGFMKVFPRSEIETEPHLKGLGPEPLGNAFDASLLAKACAGKQTSLKAALLDQRVVAGLGNIYVCEALFRAHLSPKRKASTLANRKDEPTDHAVRLTEAIREVLGEAIKAGGSSLRDHRQTSGELGYFQHAFKVYDREGEPCPTCGGTVQRFVQNGRSTFWCPKCQK.

The Schiff-base intermediate with DNA role is filled by P2. The Proton donor role is filled by E3. K58 (proton donor; for beta-elimination activity) is an active-site residue. DNA contacts are provided by H104, R123, and K166. The FPG-type zinc finger occupies K257–K291. The active-site Proton donor; for delta-elimination activity is the R281.

The protein belongs to the FPG family. Monomer. Requires Zn(2+) as cofactor.

It carries out the reaction Hydrolysis of DNA containing ring-opened 7-methylguanine residues, releasing 2,6-diamino-4-hydroxy-5-(N-methyl)formamidopyrimidine.. It catalyses the reaction 2'-deoxyribonucleotide-(2'-deoxyribose 5'-phosphate)-2'-deoxyribonucleotide-DNA = a 3'-end 2'-deoxyribonucleotide-(2,3-dehydro-2,3-deoxyribose 5'-phosphate)-DNA + a 5'-end 5'-phospho-2'-deoxyribonucleoside-DNA + H(+). Functionally, involved in base excision repair of DNA damaged by oxidation or by mutagenic agents. Acts as a DNA glycosylase that recognizes and removes damaged bases. Has a preference for oxidized purines, such as 7,8-dihydro-8-oxoguanine (8-oxoG). Has AP (apurinic/apyrimidinic) lyase activity and introduces nicks in the DNA strand. Cleaves the DNA backbone by beta-delta elimination to generate a single-strand break at the site of the removed base with both 3'- and 5'-phosphates. This chain is Formamidopyrimidine-DNA glycosylase, found in Rhodopseudomonas palustris (strain ATCC BAA-98 / CGA009).